The primary structure comprises 482 residues: Nuclear transcription factor Y subunit nfya-1 (482 aa).

The interval 1–160 (MNGASRGDVQ…NGSYIQYNEP (160 aa)) is disordered. Over residues 72–93 (SSPNVQTQCHQPPVVRSQTHQA) the composition is skewed to polar residues. Residues 94-110 (SVSQTTPTQTTPSQYTP) show a composition bias toward low complexity. Composition is skewed to polar residues over residues 126–135 (HVTPSQQQRI) and 144–160 (VSQS…YNEP). The Subunit association domain (SAD) motif lies at 306 to 329 (LVNPKQFNRIMRRREMRQQLEASG). The NFYA/HAP2-type DNA-binding region spans 336 to 361 (QKYLHESRHLHALKRKRGLDGRFDNT). Residues 344–414 (HLHALKRKRG…QPKGGIVNSS (71 aa)) form a disordered region. Residues 353–362 (GLDGRFDNTK) show a composition bias toward basic and acidic residues. Low complexity predominate over residues 363–375 (TAESSSMVSSTTS).

This sequence belongs to the NFYA/HAP2 subunit family. In terms of assembly, forms a heterotrimeric transcription factor complex (nfya-1-NF-Y complex) composed of nfya-1, nfyb-1 and nfyc-1, which binds to 5'-CCAAT-3' box motif in the promoters of its target genes. Interacts with the nfyb-1 and nfyc-1 dimer; the interaction is required for subsequent binding to the 5'-CCAAT-3' box motif in DNA. Does not interact with either nfyb-1 or nfyc-1 in their monomeric form. Interacts with mes-3. Expressed in certain parts of the gonads with high expression in fertilized oocytes in the uterus and mature oocytes from the distal to the proximal arm of the gonad, but weak expression in the syncytial ovaries and immature oocytes at the beginning of the proximal arm of the gonad. Highly expressed in the head ganglia neurons and the developing hermaphrodite vulva and male tail. Weakly expressed in most somatic cells. Not expressed in the intestine, the hypodermis, body wall muscle surrounding the pseudocoelomic space, secretory cells in the pharyngeal terminal bulb wall, in the small ganglia surrounding the pharynx and in the neurons running anteriorly to the sensory organs in the head.

It is found in the nucleus. Functionally, component of the sequence-specific heterotrimeric transcription factor (nfya-1-NF-Y) which specifically recognizes a 5'-CCAAT-3' box motif found in the promoters of its target genes to regulate their expression and control cellular identity in particular tissue types. In association with the components in the nfya-1-NF-Y complex, represses the expression of the T-box transcription factor tbx-2 throughout larval development, which most likely restricts its expression to certain tissues. May act to repress txb-2 expression in conjunction with tbx-2 itself, which has an autoregulatory role. With the components in this complex, negatively regulates the expression of the homeobox protein egl-5 to spatially restrict its expression in tissues such as the head. May regulate egl-5 expression in association with the mes-2-mes-3-mes-6 complex. The protein is Nuclear transcription factor Y subunit nfya-1 of Caenorhabditis elegans.